The primary structure comprises 148 residues: UPF0756 membrane protein NMCC_1816 (148 aa).

A run of 4 helical transmembrane segments spans residues 13–35, 50–70, 80–100, and 121–141; these read LILLGVVSNNNSITISATILLLM, HGLNLGIILLTIGVLSPLVSG, FLNFKMISAVFIGIFVAWLAG, and VIGVAFMGGIPVGPLIAAGIL.

It belongs to the UPF0756 family.

It is found in the cell membrane. The polypeptide is UPF0756 membrane protein NMCC_1816 (Neisseria meningitidis serogroup C (strain 053442)).